A 158-amino-acid chain; its full sequence is Protein Smg homolog (158 aa).

It belongs to the Smg family.

The protein is Protein Smg homolog of Pseudoalteromonas atlantica (strain T6c / ATCC BAA-1087).